Here is a 67-residue protein sequence, read N- to C-terminus: DNA-directed RNA polymerase subunit omega (67 aa).

Belongs to the RNA polymerase subunit omega family. As to quaternary structure, the RNAP catalytic core consists of 2 alpha, 1 beta, 1 beta' and 1 omega subunit. When a sigma factor is associated with the core the holoenzyme is formed, which can initiate transcription.

It carries out the reaction RNA(n) + a ribonucleoside 5'-triphosphate = RNA(n+1) + diphosphate. Functionally, promotes RNA polymerase assembly. Latches the N- and C-terminal regions of the beta' subunit thereby facilitating its interaction with the beta and alpha subunits. This is DNA-directed RNA polymerase subunit omega from Listeria monocytogenes serotype 4a (strain HCC23).